Here is a 497-residue protein sequence, read N- to C-terminus: MSEYRIQGATGEWEVVIGLEVHAQVTSNAKLFSGAATAFGAEPNTQVSLVDAAMPGMLPVPNRECIRQAVRTGMAINAQINKWSRFDRKNYFYADLPQGYQISQLYHPIVGEGSIEVQLDDKNPESLKTIGIERIHVEQDAGKLMHDQHPTMSYVDLNRSGVALMEIVSRPDMRSPAEAGAYLSKLRTILRYVGSCDGNMDQGSMRADVNVSVRRPGEPFGTRTETKNVNSVRFVMAVVEQEAKRQVALIEDGGTVVQETRLYDPDRNETRSMRSKEDAHDYRYFPDPDLLPLELDDAFLEECRASLPELPDAKRHRYETALGLSAYNAGVLTADVETARWFEALLAETAAKAKKPEAEVAKQAANWLISELFGALNKLGASLETSPVTPAAGAELLALIADGTISGSIAKQVLEKMLETGDGAAAIVEREGLKQTSDTGAIEAAIDGILAANADKVGQYKAGKEALFGFFVGQTMKAMQGKANPGVVNELLRKKLG.

Belongs to the GatB/GatE family. GatB subfamily. In terms of assembly, heterotrimer of A, B and C subunits.

It catalyses the reaction L-glutamyl-tRNA(Gln) + L-glutamine + ATP + H2O = L-glutaminyl-tRNA(Gln) + L-glutamate + ADP + phosphate + H(+). The catalysed reaction is L-aspartyl-tRNA(Asn) + L-glutamine + ATP + H2O = L-asparaginyl-tRNA(Asn) + L-glutamate + ADP + phosphate + 2 H(+). Allows the formation of correctly charged Asn-tRNA(Asn) or Gln-tRNA(Gln) through the transamidation of misacylated Asp-tRNA(Asn) or Glu-tRNA(Gln) in organisms which lack either or both of asparaginyl-tRNA or glutaminyl-tRNA synthetases. The reaction takes place in the presence of glutamine and ATP through an activated phospho-Asp-tRNA(Asn) or phospho-Glu-tRNA(Gln). The sequence is that of Aspartyl/glutamyl-tRNA(Asn/Gln) amidotransferase subunit B from Novosphingobium aromaticivorans (strain ATCC 700278 / DSM 12444 / CCUG 56034 / CIP 105152 / NBRC 16084 / F199).